The following is a 623-amino-acid chain: Cell pattern formation-associated protein stuA (623 aa).

The segment covering 13 to 31 has biased composition (polar residues); sequence QHMQSAGQPQQPQTVTSGP. The disordered stretch occupies residues 13 to 111; it reads QHMQSAGQPQ…DTTGQHPPPG (99 aa). Positions 115–221 constitute an HTH APSES-type domain; it reads RVTATLWEDE…HNIGALLYHP (107 aa). Positions 149–170 form a DNA-binding region, H-T-H motif; it reads GTKLLNVAGMTRGRRDGILKSE. Disordered regions lie at residues 232 to 270 and 332 to 623; these read AAAERRKQDQGQMRTPPAGLPSIQHQPHNSMALPGPQSS and ARSM…PRQR. A compositionally biased stretch (polar residues) spans 335–374; sequence MPTTPATTPPGSMQPYGSAQSFDGSRQQMYNAPSQQSPYP. Positions 396 to 408 are enriched in low complexity; sequence GPPSSRPSGSAPS. Positions 423–446 are enriched in basic and acidic residues; that stretch reads EHGHQSHAGEEDGEHEQHDAEYTH. Residues 542 to 553 are compositionally biased toward low complexity; that stretch reads APPADMANPMPN. A nuclear localization domain region spans residues 569-594; it reads KRGREGDDDLSRPVGDVPGMDMKRRK. A compositionally biased stretch (basic and acidic residues) spans 570-579; it reads RGREGDDDLS.

This sequence belongs to the EFG1/PHD1/stuA family.

The protein localises to the nucleus. In terms of biological role, transcription factor that regulates asexual reproduction. Binds the StuA-response elements (StRE) with the consensus sequence 5'-(A/T)CGCG(T/A)N(A/C)-3' at the promoters of target genes. Controls conidiation by positively regulating the expression of brlA and abaA. Positively regulates the cephalosporin biosynthesis gene cluster. Also involved hyphal fragmentation and cell wall integrity. The sequence is that of Cell pattern formation-associated protein stuA from Hapsidospora chrysogenum (strain ATCC 11550 / CBS 779.69 / DSM 880 / IAM 14645 / JCM 23072 / IMI 49137) (Acremonium chrysogenum).